Consider the following 1143-residue polypeptide: ATP-dependent helicase/deoxyribonuclease subunit B (1143 aa).

In terms of domain architecture, UvrD-like helicase ATP-binding spans 1–274; the sequence is MNYMHLGRAG…YGQTVKFQST (274 aa). 7–14 serves as a coordination point for ATP; it reads GRAGTGKT. The UvrD-like helicase C-terminal domain occupies 267-565; it reads QTVKFQSTGL…RFSLVPPSLD (299 aa). [4Fe-4S] cluster-binding residues include C782, C1104, C1107, and C1113.

Belongs to the helicase family. AddB/RexB type 1 subfamily. As to quaternary structure, heterodimer of AddA and AddB. Mg(2+) serves as cofactor. Requires [4Fe-4S] cluster as cofactor.

Functionally, the heterodimer acts as both an ATP-dependent DNA helicase and an ATP-dependent, dual-direction single-stranded exonuclease. Recognizes the chi site generating a DNA molecule suitable for the initiation of homologous recombination. The AddB subunit has 5' -&gt; 3' nuclease activity but not helicase activity. The protein is ATP-dependent helicase/deoxyribonuclease subunit B of Exiguobacterium sibiricum (strain DSM 17290 / CCUG 55495 / CIP 109462 / JCM 13490 / 255-15).